Reading from the N-terminus, the 242-residue chain is tRNA pseudouridine synthase A (242 aa).

Catalysis depends on aspartate 51, which acts as the Nucleophile. Tyrosine 107 lines the substrate pocket.

It belongs to the tRNA pseudouridine synthase TruA family. Homodimer.

It catalyses the reaction uridine(38/39/40) in tRNA = pseudouridine(38/39/40) in tRNA. Its function is as follows. Formation of pseudouridine at positions 38, 39 and 40 in the anticodon stem and loop of transfer RNAs. This chain is tRNA pseudouridine synthase A, found in Helicobacter pylori (strain ATCC 700392 / 26695) (Campylobacter pylori).